Reading from the N-terminus, the 233-residue chain is Large ribosomal subunit protein uL1 (233 aa).

Belongs to the universal ribosomal protein uL1 family. As to quaternary structure, part of the 50S ribosomal subunit.

In terms of biological role, binds directly to 23S rRNA. The L1 stalk is quite mobile in the ribosome, and is involved in E site tRNA release. Its function is as follows. Protein L1 is also a translational repressor protein, it controls the translation of the L11 operon by binding to its mRNA. This Brucella suis (strain ATCC 23445 / NCTC 10510) protein is Large ribosomal subunit protein uL1.